We begin with the raw amino-acid sequence, 646 residues long: Ribonuclease Y (646 aa).

Residues Val4–Ala24 traverse the membrane as a helical segment. Disordered regions lie at residues Pro43 to Glu62 and Leu69 to Ser118. Residues Val336–Asp402 enclose the KH domain. Positions Val462–Gly555 constitute an HD domain.

The protein belongs to the RNase Y family.

The protein localises to the cell membrane. Endoribonuclease that initiates mRNA decay. This is Ribonuclease Y from Frankia casuarinae (strain DSM 45818 / CECT 9043 / HFP020203 / CcI3).